A 403-amino-acid chain; its full sequence is Tyrosine--tRNA ligase (403 aa).

A 'HIGH' region motif is present at residues 42–51; that stretch reads PTAPDLHLGH. Positions 226 to 230 match the 'KMSKS' region motif; that stretch reads KMSKS. Lysine 229 lines the ATP pocket. One can recognise an S4 RNA-binding domain in the interval 339-400; it reads LRLAGLLTAA…GKRNFARVSL (62 aa).

The protein belongs to the class-I aminoacyl-tRNA synthetase family. TyrS type 2 subfamily. Homodimer.

Its subcellular location is the cytoplasm. It catalyses the reaction tRNA(Tyr) + L-tyrosine + ATP = L-tyrosyl-tRNA(Tyr) + AMP + diphosphate + H(+). Functionally, catalyzes the attachment of tyrosine to tRNA(Tyr) in a two-step reaction: tyrosine is first activated by ATP to form Tyr-AMP and then transferred to the acceptor end of tRNA(Tyr). This Xanthomonas axonopodis pv. citri (strain 306) protein is Tyrosine--tRNA ligase.